We begin with the raw amino-acid sequence, 1210 residues long: V-type proton ATPase 116 kDa subunit a 4 (1210 aa).

The Cytoplasmic segment spans residues 1–715 (MSSFSNVGFV…YTIITFPFLF (715 aa)). The span at 259-271 (SSKISFTSSSPSP) shows a compositional bias: low complexity. The tract at residues 259–292 (SSKISFTSSSPSPQRNPKNEAQKNSSSKREETSM) is disordered. The span at 275 to 291 (PKNEAQKNSSSKREETS) shows a compositional bias: basic and acidic residues. Residues 339–405 (FVKQMRRCEE…EREFLDLNNN (67 aa)) are a coiled coil. The helical transmembrane segment at 716-736 (AVMFGDAAHGAILLLAALFFI) threads the bilayer. Residues 737-760 (RNERKIESKKIRDEIFNTFYGGRY) lie on the Extracellular side of the membrane. A helical transmembrane segment spans residues 761–781 (IMMLMGIFSIYTGFLYNDAFA). Over 782–855 (KSFNVFGSGW…SFLNSMKMKA (74 aa)) the chain is Cytoplasmic. Residues 856 to 876 (SVIIGITQMTFGVFLSVLNHI) traverse the membrane as a helical segment. Residues 877 to 892 (HFKSYIDIISNFIPQV) lie on the Extracellular side of the membrane. The chain crosses the membrane as a helical span at residues 893-913 (IFLSCIFIYLCIQIIVKWIFF). Over 914 to 976 (SVNAENVFGF…WYPNQRLVET (63 aa)) the chain is Cytoplasmic. A helical membrane pass occupies residues 977–997 (ILISISLACIPIMLFGKPLWV). Residues 998–1127 (RFVTSKRHKL…NETIAMCLKP (130 aa)) lie on the Extracellular side of the membrane. N-linked (GlcNAc...) asparagine glycans are attached at residues Asn1010, Asn1019, and Asn1118. Residues 1128 to 1148 (VVACVAFFIFASLSLSILIMM) traverse the membrane as a helical segment. Over 1149-1210 (EGLSAFLHAL…DISSGQHLHI (62 aa)) the chain is Cytoplasmic.

It belongs to the V-ATPase 116 kDa subunit family. V-ATPase is a heteromultimeric enzyme made up of two complexes: the ATP-hydrolytic V1 complex and the proton translocation V0 complex. The V1 complex consists of three catalytic AB heterodimers that form a heterohexamer, three peripheral stalks each consisting of EG heterodimers, one central rotor including subunits D and F, and the regulatory subunits C and H. The proton translocation complex V0 consists of the proton transport subunit a, a ring of proteolipid subunits c9c'', rotary subunit d, subunits e and f, and the accessory subunits vah-19/Ac45 and vah-20/PRR. As to expression, expressed in uterus.

The protein localises to the membrane. In terms of biological role, subunit of the V0 complex of vacuolar(H+)-ATPase (V-ATPase), a multisubunit enzyme composed of a peripheral complex (V1) that hydrolyzes ATP and a membrane integral complex (V0) that translocates protons. V-ATPase is responsible for acidifying and maintaining the pH of intracellular compartments and in some cell types, is targeted to the plasma membrane, where it is responsible for acidifying the extracellular environment. This is V-type proton ATPase 116 kDa subunit a 4 from Caenorhabditis elegans.